Reading from the N-terminus, the 593-residue chain is Putative auxin response factor 15 (593 aa).

Residues 126–228 (FTKVLTASDI…ELRVGIRRAR (103 aa)) constitute a DNA-binding region (TF-B3). Residues 511 to 592 (RTCTKVQMQG…MVKRIYIQKR (82 aa)) form the PB1 domain.

It belongs to the ARF family. In terms of assembly, homodimers and heterodimers.

It localises to the nucleus. Its function is as follows. Auxin response factors (ARFs) are transcriptional factors that bind specifically to the DNA sequence 5'-TGTCTC-3' found in the auxin-responsive promoter elements (AuxREs). Could act as transcriptional activator or repressor. Formation of heterodimers with Aux/IAA proteins may alter their ability to modulate early auxin response genes expression. This Arabidopsis thaliana (Mouse-ear cress) protein is Putative auxin response factor 15 (ARF15).